The following is a 722-amino-acid chain: PAB1-binding protein 1 (722 aa).

A compositionally biased stretch (basic and acidic residues) spans 1 to 10 (MKGNFRKRDS). Positions 1–38 (MKGNFRKRDSSTNSRKGGNSDSNYTNGGVPNQNNSSMF) are disordered. Polar residues predominate over residues 11-38 (STNSRKGGNSDSNYTNGGVPNQNNSSMF). Positions 51 to 107 (RQDYLLANSIGSDVTVTVTSGVKYTGLLVSCNLESTNGIDVVLRFPRVADSGVSDSV) constitute a Sm domain. The residue at position 106 (S106) is a Phosphoserine. T193 is subject to Phosphothreonine. At S215 the chain carries Phosphoserine. Disordered stretches follow at residues 305–380 (ALKS…LSSK), 412–488 (SSTL…NPHT), and 683–722 (GSGPSGMPANGSAMHSHGHSRNYHQTSHHGHHNSSTSGHK). Low complexity-rich tracts occupy residues 307 to 316 (KSNSKPNSNK), 338 to 347 (SSSNSNKNEN), 356 to 370 (PAAAGAPEGKPPQKT), and 412 to 421 (SSTLKSNSSL). K344 participates in a covalent cross-link: Glycyl lysine isopeptide (Lys-Gly) (interchain with G-Cter in ubiquitin). The segment covering 429–455 (TPSAKTVSPTTQISAGKSESRRSGSNI) has biased composition (polar residues). S436 carries the post-translational modification Phosphoserine. Positions 456–471 (SQGQSSTGHTTRSSTS) are enriched in low complexity. Residues 698–722 (SHGHSRNYHQTSHHGHHNSSTSGHK) are compositionally biased toward basic residues.

This sequence belongs to the ataxin-2 family. Interacts (via C-terminus) with MKT1 (via C-terminus). Interacts with FIR1, IGO1, LSM12, PBP4 and PAB1.

The protein localises to the cytoplasm. Its subcellular location is the nucleus. The protein resides in the mitochondrion. In terms of biological role, involved in pre-mRNA polyadenylation. May act to repress the ability of PAB1 to negatively regulate polyadenylation. Negative regulator of poly(A) nuclease (PAN) activity. Promotes mating-type switching in mother cells by positively regulating HO mRNA translation. Localizes MKT1 to polysomes. The polypeptide is PAB1-binding protein 1 (PBP1) (Saccharomyces cerevisiae (strain ATCC 204508 / S288c) (Baker's yeast)).